Consider the following 1927-residue polypeptide: Immunoglobulin A1 protease (1927 aa).

Positions 1 to 42 (MEKYFGEKQERFSFRKLSVGLVSATISSLFFMSVLASSSVDA) are cleaved as a signal peptide. Residues 43–99 (QETAGVHYKYVADSELSSEEKKQLVYDIPTYVENDDETYYLVYKLNSQNQLAELPNT) constitute a propeptide that is removed on maturation. The short motif at 96–100 (LPNTG) is the LPXTG sorting signal element. The residue at position 99 (T99) is a Pentaglycyl murein peptidoglycan amidated threonine. The next 2 helical transmembrane spans lie at 106-125 (QALVAGASLAALGILIFAVS) and 132-154 (KTVLHLVLVAGIGNGVLVSVHAL). The Extracellular portion of the chain corresponds to 155 to 1927 (ENHLLLNYNT…FRRSIFENKK (1773 aa)). Residues 235–246 (QEQTPVSSTKPT) are compositionally biased toward polar residues. Disordered stretches follow at residues 235 to 305 (QEQT…NPQD), 371 to 394 (SREIVSTSTTAPSPRIVEKGTKKT), and 426 to 640 (EAVV…PEKT). A compositionally biased stretch (basic and acidic residues) spans 276-296 (LAEHKNLETKKEEKISPKEKT). The 80-residue stretch at 314–393 (KPELLYREET…PRIVEKGTKK (80 aa)) folds into the G5 domain. 3 tandem repeats follow at residues 419-435 (AIQPELPEAVVSDKGEP), 436-452 (EVQPTLPEAVVTDKGEP), and 453-469 (AVQPELPEAVVSDKGEP). Residues 419–469 (AIQPELPEAVVSDKGEPEVQPTLPEAVVTDKGEPAVQPELPEAVVSDKGEP) form a 3 X 17 AA approximate tandem repeats region. Basic and acidic residues predominate over residues 485–511 (VKPETPVEKTKEQGPEKTEEVPVKPTE). 3 stretches are compositionally biased toward polar residues: residues 516–529 (NPNEGTTEGTSIQG), 538–559 (EDTQTNSGKIANENTGEVSNKP), and 568–606 (ESNQPEKNGTATKPENSGNTTSENGQTEPEPSNGNSTED). Over residues 609–619 (TKSNTSNSNGN) the composition is skewed to low complexity. Basic and acidic residues predominate over residues 620–640 (EEIKQENELDPDKKVEDPEKT). H1565 contributes to the Zn(2+) binding site. Residue E1566 is part of the active site. Zn(2+) is bound by residues H1569 and E1589.

This sequence belongs to the peptidase M26 family. The cofactor is Zn(2+). The Gram-positive cell-wall anchor motif LPXTG is located in the N-terminal part, in contrast to such motifs in other known streptococcal and staphylococcal proteins. The protease could be cleaved by the sortase and anchored in the membrane via the two potential N-terminal transmembrane domains, whereas the propeptide located prior to the LPXTG motif would remain attached to the cell wall peptidoglycan by an amide bond.

The protein resides in the secreted. It is found in the cell wall. The protein localises to the membrane. It catalyses the reaction Cleavage of Pro-|-Thr bond in the hinge region of the heavy chain of human IgA.. Functionally, zinc metalloproteinase which cleaves human immunoglobulin A1 (IgA1) in the hinge region, rendering it less efficient in coating the surface of colonizing or invading pneumococci. May be responsible for pneumococcal infection and is potentially involved in distinct stages of pneumococcal disease. This Streptococcus pneumoniae protein is Immunoglobulin A1 protease (iga).